The chain runs to 483 residues: 6-phosphogluconate dehydrogenase, decarboxylating (483 aa).

NADP(+) is bound by residues 10–15 (GLAVMG) and 33–35 (NRT). At Lys-38 the chain carries N6-acetyllysine. Ser-57 bears the Phosphoserine mark. Residues 75 to 77 (VKA) and Asn-103 each bind NADP(+). Positions 103, 129, and 131 each coordinate substrate. Ser-129 bears the Phosphoserine mark. The active-site Proton acceptor is Lys-184. 187–188 (HN) contributes to the substrate binding site. Glu-191 serves as the catalytic Proton donor. Positions 192, 261, 288, 447, and 453 each coordinate substrate. NADP(+) is bound at residue 478-481 (SSSY).

Belongs to the 6-phosphogluconate dehydrogenase family. In terms of assembly, homodimer.

The protein localises to the cytoplasm. The catalysed reaction is 6-phospho-D-gluconate + NADP(+) = D-ribulose 5-phosphate + CO2 + NADPH. It participates in carbohydrate degradation; pentose phosphate pathway; D-ribulose 5-phosphate from D-glucose 6-phosphate (oxidative stage): step 3/3. Its function is as follows. Catalyzes the oxidative decarboxylation of 6-phosphogluconate to ribulose 5-phosphate and CO(2), with concomitant reduction of NADP to NADPH. The sequence is that of 6-phosphogluconate dehydrogenase, decarboxylating (PGD) from Ovis aries (Sheep).